Reading from the N-terminus, the 485-residue chain is Hexokinase (485 aa).

Position 15 is a phosphoserine (serine 15). The Hexokinase domain maps to 21 to 468 (ANLMEQIHGL…SGVGAAIIAC (448 aa)). Positions 75–208 (TGKETGDFLA…NIPINVVALI (134 aa)) are hexokinase small subdomain. Lysine 111 is a binding site for ATP. Residues 151–177 (PLGFTFSYPASQKKINSGVLQRWTKGF) are glucose-binding. Residues 209–457 (NDTTGTLVAS…HPIQLVAAED (249 aa)) form a hexokinase large subdomain region.

As to quaternary structure, monomer and homodimer. The monomeric form is active, the homodimeric form inactive.

It carries out the reaction a D-hexose + ATP = a D-hexose 6-phosphate + ADP + H(+). The enzyme catalyses D-fructose + ATP = D-fructose 6-phosphate + ADP + H(+). It catalyses the reaction D-glucose + ATP = D-glucose 6-phosphate + ADP + H(+). The protein operates within carbohydrate metabolism; hexose metabolism. Its pathway is carbohydrate degradation; glycolysis; D-glyceraldehyde 3-phosphate and glycerone phosphate from D-glucose: step 1/4. Functionally, catalyzes the phosphorylation of hexose, such as D-glucose and D-fructose, to hexose 6-phosphate (D-glucose 6-phosphate and D-fructose 6-phosphate, respectively). Has higher affinity for D-glucose. Mediates the initial step of glycolysis by catalyzing phosphorylation of D-glucose to D-glucose 6-phosphate. This chain is Hexokinase (RAG5), found in Kluyveromyces lactis (strain ATCC 8585 / CBS 2359 / DSM 70799 / NBRC 1267 / NRRL Y-1140 / WM37) (Yeast).